The primary structure comprises 371 residues: MKTTPNEKLLKKALHSCNNKKYADKILHQEKEIFDLKQLLQISKSLNSVLEFDRLIEAILYIVMAQLKTLGAAIFTKKSFDDNLFVLNRDHYGFDIIRDAQYSINVDHPLINFLDKSDSGCTPDEISKNIKTDKIVKDLFSLSPSFFVPLKAKNRMIGFLLLGEKMESSHQFTDYEKNIIENIASLAAIAINNSQLLEMTTTDIMTHLKLKHYFFTLLMEHLYTINSSGEKKETLSILMIDIDFFKNINDTYGHAAGDIVLEEVAKIIKSCTRNADTAARYGGEEFIVMLNNTSASAAMAVAERIRKSVEEKSIMYDGKKINVTISIGVSSYNFDLESAKSIVERADKALYESKQNGRNRVTLSKNNLPKA.

The region spanning 233–366 is the GGDEF domain; that stretch reads ETLSILMIDI…GRNRVTLSKN (134 aa). Mg(2+) is bound by residues D241, I242, and E284. Residue E284 is the Proton acceptor of the active site.

Exists as a homodimer and as larger aggregates. Both dimers and aggregates possess DGC activity. Mg(2+) serves as cofactor. Requires Mn(2+) as cofactor.

The protein resides in the cytoplasm. The catalysed reaction is 2 GTP = 3',3'-c-di-GMP + 2 diphosphate. With respect to regulation, allosterically regulated by a feedback inhibition loop. In terms of biological role, catalyzes the conversion of GTP to cyclic-di-GMP (c-di-GMP). Shows activity under aerobic and anaerobic reaction conditions. This chain is Diguanylate cyclase A, found in Treponema denticola (strain ATCC 35405 / DSM 14222 / CIP 103919 / JCM 8153 / KCTC 15104).